The following is a 287-amino-acid chain: Phosphatidylserine decarboxylase proenzyme (287 aa).

Active-site charge relay system; for autoendoproteolytic cleavage activity residues include aspartate 90, histidine 147, and serine 252. Residue serine 252 is the Schiff-base intermediate with substrate; via pyruvic acid; for decarboxylase activity of the active site. Position 252 is a pyruvic acid (Ser); by autocatalysis (serine 252).

It belongs to the phosphatidylserine decarboxylase family. PSD-B subfamily. Prokaryotic type I sub-subfamily. In terms of assembly, heterodimer of a large membrane-associated beta subunit and a small pyruvoyl-containing alpha subunit. It depends on pyruvate as a cofactor. Post-translationally, is synthesized initially as an inactive proenzyme. Formation of the active enzyme involves a self-maturation process in which the active site pyruvoyl group is generated from an internal serine residue via an autocatalytic post-translational modification. Two non-identical subunits are generated from the proenzyme in this reaction, and the pyruvate is formed at the N-terminus of the alpha chain, which is derived from the carboxyl end of the proenzyme. The autoendoproteolytic cleavage occurs by a canonical serine protease mechanism, in which the side chain hydroxyl group of the serine supplies its oxygen atom to form the C-terminus of the beta chain, while the remainder of the serine residue undergoes an oxidative deamination to produce ammonia and the pyruvoyl prosthetic group on the alpha chain. During this reaction, the Ser that is part of the protease active site of the proenzyme becomes the pyruvoyl prosthetic group, which constitutes an essential element of the active site of the mature decarboxylase.

It localises to the cell membrane. It carries out the reaction a 1,2-diacyl-sn-glycero-3-phospho-L-serine + H(+) = a 1,2-diacyl-sn-glycero-3-phosphoethanolamine + CO2. The protein operates within phospholipid metabolism; phosphatidylethanolamine biosynthesis; phosphatidylethanolamine from CDP-diacylglycerol: step 2/2. Catalyzes the formation of phosphatidylethanolamine (PtdEtn) from phosphatidylserine (PtdSer). This Pseudomonas entomophila (strain L48) protein is Phosphatidylserine decarboxylase proenzyme.